Consider the following 116-residue polypeptide: Non-specific lipid-transfer protein 8 (116 aa).

Positions Met1–Ser24 are cleaved as a signal peptide. Cystine bridges form between Cys28–Cys76, Cys38–Cys53, Cys54–Cys98, and Cys74–Cys112.

This sequence belongs to the plant LTP family.

Plant non-specific lipid-transfer proteins transfer phospholipids as well as galactolipids across membranes. May play a role in wax or cutin deposition in the cell walls of expanding epidermal cells and certain secretory tissues. The polypeptide is Non-specific lipid-transfer protein 8 (LTP8) (Arabidopsis thaliana (Mouse-ear cress)).